Consider the following 239-residue polypeptide: Serine protease SplC (239 aa).

An N-terminal signal peptide occupies residues 1–36 (MNKNIVIKSMAALAILTSVTGINAAVVEETQQIANA). Catalysis depends on charge relay system residues histidine 75, aspartate 113, and serine 193.

This sequence belongs to the peptidase S1B family.

The protein resides in the secreted. The chain is Serine protease SplC (splC) from Staphylococcus aureus.